The primary structure comprises 951 residues: Serine/threonine-protein phosphatase 4 regulatory subunit 1 (951 aa).

8 HEAT repeats span residues 26–63 (ESDV…VFNR), 65–81 (MVAR…CDDE), 82–119 (RDCI…FCQE), 127–164 (AFSK…QELI), 168–206 (DVET…MVGK), 208–246 (ITER…VVGQ), 248–285 (ATEE…ATCQ), and 287–324 (IRRT…TFAN). Disordered regions lie at residues 325–377 (PSSS…HSSA), 411–451 (SESP…PLDQ), and 474–499 (QQDP…GPPN). Positions 332–365 (FKDESKSSEDSSAEDKDRMRDNDVVEEEHRRPED) are enriched in basic and acidic residues. Polar residues-rich tracts occupy residues 411–421 (SESPQEAASND) and 430–445 (NSKS…SSPE). Basic and acidic residues predominate over residues 474–487 (QQDPEERLSPERTG). Residues 506–543 (KELEEMIENLEPHMDDPDVKAQVDVLSAALRASSLDAH) form an HEAT 9 repeat. The tract at residues 590-612 (DYVHGGADVSPGDGFSPDEDRRP) is disordered. HEAT repeat units lie at residues 699–735 (LTAA…LLHI), 800–838 (WISY…RCPK), and 862–899 (QFAV…EKEY). Phosphoserine is present on Ser-936.

Serine/threonine-protein phosphatase 4 (PP4) occurs in different assemblies of the catalytic and one or more regulatory subunits. Component of the PP4 complex PPP4C-PPP4R1. Interacts with HDAC3.

In terms of biological role, regulatory subunit of serine/threonine-protein phosphatase 4. May play a role in regulation of cell division in renal glomeruli. The PPP4C-PPP4R1 PP4 complex may play a role in dephosphorylation and regulation of HDAC3. Plays a role in the inhibition of TNF-induced NF-kappa-B activation by regulating the dephosphorylation of TRAF2. The polypeptide is Serine/threonine-protein phosphatase 4 regulatory subunit 1 (Ppp4r1) (Mus musculus (Mouse)).